The primary structure comprises 222 residues: PKHD-type hydroxylase PCC8801_2196 (222 aa).

Positions 78–175 constitute a Fe2OG dioxygenase domain; the sequence is RIHSLLFSRY…RLVVVGWIES (98 aa). Histidine 96, aspartate 98, and histidine 156 together coordinate Fe cation. Arginine 166 contributes to the 2-oxoglutarate binding site.

It depends on Fe(2+) as a cofactor. L-ascorbate serves as cofactor.

The sequence is that of PKHD-type hydroxylase PCC8801_2196 from Rippkaea orientalis (strain PCC 8801 / RF-1) (Cyanothece sp. (strain PCC 8801)).